Here is a 239-residue protein sequence, read N- to C-terminus: Chaperone protein PapD (239 aa).

A signal peptide spans 1 to 21 (MIRKKILMAAIPLFVISGADA). Cysteines 228 and 233 form a disulfide.

Belongs to the periplasmic pilus chaperone family. Interacts with substrates PapG and PapK.

Its subcellular location is the periplasm. Its function is as follows. Binds and caps interactive surfaces on P pilus subunits to prevent them from participating in non-productive interactions. Facilitates the import of P pilus subunits into the periplasm, probably also facilitates their folding. Chaperone-subunit complexes are then targeted to the PapC outer membrane usher where the chaperone must uncap from the subunits. Coexpression of this chaperone with individual, otherwise toxic, P pilus subunits (tested with PapA, PapE and PapG) suppresses their growth inhibitory phenotype. In Escherichia coli, this protein is Chaperone protein PapD (papD).